The following is a 248-amino-acid chain: DCN1-like protein 4 (248 aa).

The segment at 1–35 (MPRGKRRAADTISDNMDHGQPKRARTSYTSIPTQQ) is disordered. A compositionally biased stretch (polar residues) spans 26–35 (TSYTSIPTQQ). In terms of domain architecture, DCUN1 spans 47-235 (FSQKRCMAWF…MLDEFVEWLR (189 aa)).

It is found in the nucleus. In terms of biological role, inhibits neddylation of cullin components of SCF-type E3 ubiquitin ligase complexes and thus regulates SCF-type complex activity. Essential for development. Function inhibits cell proliferation and cell growth. This is DCN1-like protein 4 from Drosophila melanogaster (Fruit fly).